A 218-amino-acid chain; its full sequence is Phosphoglycolate phosphatase (218 aa).

The active-site Nucleophile is Asp-7. The Mg(2+) site is built by Asp-7, Asp-9, and Asp-167.

Belongs to the HAD-like hydrolase superfamily. CbbY/CbbZ/Gph/YieH family. The cofactor is Mg(2+).

The catalysed reaction is 2-phosphoglycolate + H2O = glycolate + phosphate. Its pathway is organic acid metabolism; glycolate biosynthesis; glycolate from 2-phosphoglycolate: step 1/1. Functionally, specifically catalyzes the dephosphorylation of 2-phosphoglycolate. Is involved in the dissimilation of the intracellular 2-phosphoglycolate formed during the DNA repair of 3'-phosphoglycolate ends, a major class of DNA lesions induced by oxidative stress. The chain is Phosphoglycolate phosphatase from Cereibacter sphaeroides (Rhodobacter sphaeroides).